A 1207-amino-acid polypeptide reads, in one-letter code: Disease resistance protein RPP2B (1207 aa).

The 166-residue stretch at cysteine 15–leucine 180 folds into the TIR domain. The active site involves glutamate 89. In terms of domain architecture, NB-ARC spans glutamate 201–serine 445. LRR repeat units follow at residues proline 607–threonine 630, alanine 653–methionine 676, asparagine 677–isoleucine 699, serine 720–leucine 743, histidine 744–leucine 767, serine 769–methionine 791, glutamate 792–asparagine 815, asparagine 840–serine 862, and leucine 863–leucine 886.

The protein belongs to the disease resistance TIR-NB-LRR family.

The enzyme catalyses NAD(+) + H2O = ADP-D-ribose + nicotinamide + H(+). Its function is as follows. Disease resistance protein that cooperates with RPP2A to confer resistance to Hyaloperonospora parasitica isolate Cala2. The protein is Disease resistance protein RPP2B of Arabidopsis thaliana (Mouse-ear cress).